Here is a 313-residue protein sequence, read N- to C-terminus: Probable cell division protein WhiA (313 aa).

The segment at residues 280–313 (SLKELGAMLNPPIGKSGVNHRLKKLCSIADGLRQ) is a DNA-binding region (H-T-H motif).

This sequence belongs to the WhiA family.

Involved in cell division and chromosome segregation. The protein is Probable cell division protein WhiA of Lachnoclostridium phytofermentans (strain ATCC 700394 / DSM 18823 / ISDg) (Clostridium phytofermentans).